Reading from the N-terminus, the 288-residue chain is UDP-3-O-acyl-N-acetylglucosamine deacetylase (288 aa).

Zn(2+) is bound by residues histidine 79, histidine 236, and aspartate 240. The active-site Proton donor is histidine 263.

It belongs to the LpxC family. Requires Zn(2+) as cofactor.

It catalyses the reaction a UDP-3-O-[(3R)-3-hydroxyacyl]-N-acetyl-alpha-D-glucosamine + H2O = a UDP-3-O-[(3R)-3-hydroxyacyl]-alpha-D-glucosamine + acetate. Its pathway is glycolipid biosynthesis; lipid IV(A) biosynthesis; lipid IV(A) from (3R)-3-hydroxytetradecanoyl-[acyl-carrier-protein] and UDP-N-acetyl-alpha-D-glucosamine: step 2/6. Its function is as follows. Catalyzes the hydrolysis of UDP-3-O-myristoyl-N-acetylglucosamine to form UDP-3-O-myristoylglucosamine and acetate, the committed step in lipid A biosynthesis. The sequence is that of UDP-3-O-acyl-N-acetylglucosamine deacetylase from Rickettsia prowazekii (strain Madrid E).